Consider the following 56-residue polypeptide: Large ribosomal subunit protein bL32 (56 aa).

This sequence belongs to the bacterial ribosomal protein bL32 family.

The protein is Large ribosomal subunit protein bL32 of Synechococcus sp. (strain CC9311).